A 25-amino-acid chain; its full sequence is Oxyopinin-3c (25 aa).

Expressed by the venom gland.

It localises to the secreted. In terms of biological role, may have cytolytic and antimicrobial activity. The chain is Oxyopinin-3c from Oxyopes takobius (Lynx spider).